The sequence spans 524 residues: Cytochrome P450 1A1 (524 aa).

The mitochondrial targeting signal stretch occupies residues 33–44; it reads WQPRLPKGLKSP. An O-linked (GlcNAc) serine glycan is attached at S71. F228 is a binding site for substrate. C461 contributes to the heme binding site.

This sequence belongs to the cytochrome P450 family. As to quaternary structure, interacts with cytosolic chaperones HSP70 and HSP90; this interaction is required for initial targeting to mitochondria. Interacts (via mitochondrial targeting signal) with TOMM40 (via N-terminus); this interaction is required for translocation across the mitochondrial outer membrane. Requires heme as cofactor.

The protein resides in the endoplasmic reticulum membrane. It is found in the mitochondrion inner membrane. Its subcellular location is the microsome membrane. The protein localises to the cytoplasm. It catalyses the reaction an organic molecule + reduced [NADPH--hemoprotein reductase] + O2 = an alcohol + oxidized [NADPH--hemoprotein reductase] + H2O + H(+). It carries out the reaction estrone + reduced [NADPH--hemoprotein reductase] + O2 = 2-hydroxyestrone + oxidized [NADPH--hemoprotein reductase] + H2O + H(+). The catalysed reaction is estrone + reduced [NADPH--hemoprotein reductase] + O2 = 4-hydroxyestrone + oxidized [NADPH--hemoprotein reductase] + H2O + H(+). The enzyme catalyses estrone + reduced [NADPH--hemoprotein reductase] + O2 = 6alpha-hydroxyestrone + oxidized [NADPH--hemoprotein reductase] + H2O + H(+). It catalyses the reaction estrone + reduced [NADPH--hemoprotein reductase] + O2 = 15alpha-hydroxyestrone + oxidized [NADPH--hemoprotein reductase] + H2O + H(+). It carries out the reaction estrone + reduced [NADPH--hemoprotein reductase] + O2 = 16alpha-hydroxyestrone + oxidized [NADPH--hemoprotein reductase] + H2O + H(+). The catalysed reaction is 17beta-estradiol + reduced [NADPH--hemoprotein reductase] + O2 = 2-hydroxy-17beta-estradiol + oxidized [NADPH--hemoprotein reductase] + H2O + H(+). The enzyme catalyses 17beta-estradiol + reduced [NADPH--hemoprotein reductase] + O2 = 4-hydroxy-17beta-estradiol + oxidized [NADPH--hemoprotein reductase] + H2O + H(+). It catalyses the reaction 17beta-estradiol + reduced [NADPH--hemoprotein reductase] + O2 = 6alpha-hydroxy-17beta-estradiol + oxidized [NADPH--hemoprotein reductase] + H2O + H(+). It carries out the reaction 17beta-estradiol + reduced [NADPH--hemoprotein reductase] + O2 = 7alpha-hydroxy-17beta-estradiol + oxidized [NADPH--hemoprotein reductase] + H2O + H(+). The catalysed reaction is 17beta-estradiol + reduced [NADPH--hemoprotein reductase] + O2 = 15alpha-hydroxy-17beta-estradiol + oxidized [NADPH--hemoprotein reductase] + H2O + H(+). The enzyme catalyses (5Z,8Z,11Z)-eicosatrienoate + reduced [NADPH--hemoprotein reductase] + O2 = 19-hydroxy-(5Z,8Z,11Z)-eicosatrienoate + oxidized [NADPH--hemoprotein reductase] + H2O + H(+). It catalyses the reaction (5Z,8Z,11Z,14Z)-eicosatetraenoate + reduced [NADPH--hemoprotein reductase] + O2 = 16-hydroxy-(5Z,8Z,11Z,14Z)-eicosatetraenoate + oxidized [NADPH--hemoprotein reductase] + H2O + H(+). It carries out the reaction (5Z,8Z,11Z,14Z)-eicosatetraenoate + reduced [NADPH--hemoprotein reductase] + O2 = 17-hydroxy-(5Z,8Z,11Z,14Z)-eicosatetraenoate + oxidized [NADPH--hemoprotein reductase] + H2O + H(+). The catalysed reaction is (5Z,8Z,11Z,14Z)-eicosatetraenoate + reduced [NADPH--hemoprotein reductase] + O2 = 18-hydroxy-(5Z,8Z,11Z,14Z)-eicosatetraenoate + oxidized [NADPH--hemoprotein reductase] + H2O + H(+). The enzyme catalyses (5Z,8Z,11Z,14Z)-eicosatetraenoate + reduced [NADPH--hemoprotein reductase] + O2 = 19-hydroxy-(5Z,8Z,11Z,14Z)-eicosatetraenoate + oxidized [NADPH--hemoprotein reductase] + H2O + H(+). It catalyses the reaction (5Z,8Z,11Z,14Z,17Z)-eicosapentaenoate + reduced [NADPH--hemoprotein reductase] + O2 = 19-hydroxy-(5Z,8Z,11Z,14Z,17Z)-eicosapentaenoate + oxidized [NADPH--hemoprotein reductase] + H2O + H(+). It carries out the reaction (5Z,8Z,11Z,14Z)-eicosatetraenoate + reduced [NADPH--hemoprotein reductase] + O2 = (8R,9S)-epoxy-(5Z,11Z,14Z)-eicosatrienoate + oxidized [NADPH--hemoprotein reductase] + H2O + H(+). The catalysed reaction is (5Z,8Z,11Z,14Z)-eicosatetraenoate + reduced [NADPH--hemoprotein reductase] + O2 = (11R,12S)-epoxy-(5Z,8Z,14Z)-eicosatrienoate + oxidized [NADPH--hemoprotein reductase] + H2O + H(+). The enzyme catalyses (5Z,8Z,11Z,14Z)-eicosatetraenoate + reduced [NADPH--hemoprotein reductase] + O2 = (14S,15R)-epoxy-(5Z,8Z,11Z)-eicosatrienoate + oxidized [NADPH--hemoprotein reductase] + H2O + H(+). It catalyses the reaction (5Z,8Z,11Z,14Z)-eicosatetraenoate + reduced [NADPH--hemoprotein reductase] + O2 = (14R,15S)-epoxy-(5Z,8Z,11Z)-eicosatrienoate + oxidized [NADPH--hemoprotein reductase] + H2O + H(+). It carries out the reaction (5Z,8Z,11Z,14Z,17Z)-eicosapentaenoate + reduced [NADPH--hemoprotein reductase] + O2 = (17R,18S)-epoxy-(5Z,8Z,11Z,14Z)-eicosatetraenoate + oxidized [NADPH--hemoprotein reductase] + H2O + H(+). The catalysed reaction is (4Z,7Z,10Z,13Z,16Z,19Z)-docosahexaenoate + reduced [NADPH--hemoprotein reductase] + O2 = (19S,20R)-epoxy-(4Z,7Z,10Z,13Z,16Z)-docosapentaenoate + oxidized [NADPH--hemoprotein reductase] + H2O + H(+). The enzyme catalyses (4Z,7Z,10Z,13Z,16Z,19Z)-docosahexaenoate + reduced [NADPH--hemoprotein reductase] + O2 = (19R,20S)-epoxy-(4Z,7Z,10Z,13Z,16Z)-docosapentaenoate + oxidized [NADPH--hemoprotein reductase] + H2O + H(+). It catalyses the reaction all-trans-retinol + reduced [NADPH--hemoprotein reductase] + O2 = all-trans-retinal + oxidized [NADPH--hemoprotein reductase] + 2 H2O + H(+). It carries out the reaction all-trans-retinal + reduced [NADPH--hemoprotein reductase] + O2 = all-trans-retinoate + oxidized [NADPH--hemoprotein reductase] + H2O + 2 H(+). The catalysed reaction is (13S)-hydroperoxy-(9Z,11E)-octadecadienoate = 13-oxo-(9Z,11E)-octadecadienoate + H2O. The enzyme catalyses (12S)-hydroperoxy-(5Z,8Z,10E,14Z)-eicosatetraenoate = 12-oxo-(5Z,8Z,10E,14Z)-eicosatetraenoate + H2O. It catalyses the reaction (15S)-hydroperoxy-(5Z,8Z,11Z,13E)-eicosatetraenoate = 15-oxo-(5Z,8Z,11Z,13E)-eicosatetraenoate + H2O. It carries out the reaction (5S)-hydroperoxy-(6E,8Z,11Z,14Z)-eicosatetraenoate = 5-oxo-(6E,8Z,11Z,14Z)-eicosatetraenoate + H2O. It participates in steroid hormone biosynthesis. The protein operates within lipid metabolism; fatty acid metabolism. It functions in the pathway cofactor metabolism; retinol metabolism. In terms of biological role, a cytochrome P450 monooxygenase involved in the metabolism of various endogenous substrates, including fatty acids, steroid hormones and vitamins. Mechanistically, uses molecular oxygen inserting one oxygen atom into a substrate, and reducing the second into a water molecule, with two electrons provided by NADPH via cytochrome P450 reductase (CPR; NADPH-ferrihemoprotein reductase). Catalyzes the hydroxylation of carbon-hydrogen bonds. Exhibits high catalytic activity for the formation of hydroxyestrogens from estrone (E1) and 17beta-estradiol (E2), namely 2-hydroxy E1 and E2, as well as D-ring hydroxylated E1 and E2 at the C15alpha and C16alpha positions. Displays different regioselectivities for polyunsaturated fatty acids (PUFA) hydroxylation. Catalyzes the epoxidation of double bonds of certain PUFA. Converts arachidonic acid toward epoxyeicosatrienoic acid (EET) regioisomers, 8,9-, 11,12-, and 14,15-EET, that function as lipid mediators in the vascular system. Displays an absolute stereoselectivity in the epoxidation of eicosapentaenoic acid (EPA) producing the 17(R),18(S) enantiomer. May play an important role in all-trans retinoic acid biosynthesis in extrahepatic tissues. Catalyzes two successive oxidative transformation of all-trans retinol to all-trans retinal and then to the active form all-trans retinoic acid. May also participate in eicosanoids metabolism by converting hydroperoxide species into oxo metabolites (lipoxygenase-like reaction, NADPH-independent). The protein is Cytochrome P450 1A1 (CYP1A1) of Canis lupus familiaris (Dog).